The primary structure comprises 639 residues: MAANEKTYLSETAKVDQSSVQPFPNSSKIYVEGSRSDIRVPMREISLADTPTDFGGEQNRPVRVYDTSGPYTDPEVQIDLRTGLPDVRSRWINERGDTEALAEKSSLFATQRLNDPALASLRFQHLRTPRRAKSGANVSQMHYARQGIITPEMEYIAIRENMSLQQAREQGVLQEQHAGQAFGAAIPDEITPEFVRSEVARGRAIIPANINHPELEPMIIGRNFLVKINGNIGNSALGSSIEEEVAKLTWGTRWGADTIMDLSTGKNIHETREWIIRNASVPIGTVPIYQALEKVDGIAEDLTWDIFRDTLIEQAEQGVDYFTIHAGVLLRYVPLTAKRVTGIVSRGGSIMAKWCLAHHQENFLYTHFEDICEIMKAYDVSFSLGDGLRPGSIADANDEAQFGELETLGELTKIAWQHDVQTMIEGPGHVPMQMIKENMDKQLRECGEAPFYTLGPLTTDIAPGYDHITSGIGAAMIGWYGCAMLCYVTPKEHLGLPNKDDVKEGIITYKIAAHAADLAKGHPGAQIRDNALSKARFEFRWEDQFNLGLDPDTARAYHDETLPKESAKVAHFCSMCGPKFCSMKITQEVRDYAAEHGTEITPRAPGEAEEVVRMVDVEAEMQKKSDEFRAQGSEIYSKV.

The segment at 49–71 is disordered; it reads DTPTDFGGEQNRPVRVYDTSGPY. Substrate-binding positions include asparagine 231, methionine 260, tyrosine 289, histidine 325, 345–347, 386–389, and glutamate 425; these read SRG and DGLR. Histidine 429 contributes to the Zn(2+) binding site. Tyrosine 452 contributes to the substrate binding site. Histidine 493 serves as a coordination point for Zn(2+). Positions 573, 576, and 581 each coordinate [4Fe-4S] cluster.

This sequence belongs to the ThiC family. As to quaternary structure, homodimer. [4Fe-4S] cluster serves as cofactor.

It catalyses the reaction 5-amino-1-(5-phospho-beta-D-ribosyl)imidazole + S-adenosyl-L-methionine = 4-amino-2-methyl-5-(phosphooxymethyl)pyrimidine + CO + 5'-deoxyadenosine + formate + L-methionine + 3 H(+). Its pathway is cofactor biosynthesis; thiamine diphosphate biosynthesis. In terms of biological role, catalyzes the synthesis of the hydroxymethylpyrimidine phosphate (HMP-P) moiety of thiamine from aminoimidazole ribotide (AIR) in a radical S-adenosyl-L-methionine (SAM)-dependent reaction. The sequence is that of Phosphomethylpyrimidine synthase from Teredinibacter turnerae (strain ATCC 39867 / T7901).